Reading from the N-terminus, the 45-residue chain is Photosystem II reaction center protein K (45 aa).

Positions 1–8 are excised as a propeptide; sequence MITAIIIA. Residues 23 to 43 traverse the membrane as a helical segment; that stretch reads ILPVIPIFFLLLAFVWQAAIG.

The protein belongs to the PsbK family. In terms of assembly, PSII is composed of 1 copy each of membrane proteins PsbA, PsbB, PsbC, PsbD, PsbE, PsbF, PsbH, PsbI, PsbJ, PsbK, PsbL, PsbM, PsbT, PsbX, PsbY, PsbZ, Psb30/Ycf12, at least 3 peripheral proteins of the oxygen-evolving complex and a large number of cofactors. It forms dimeric complexes.

It is found in the plastid. Its subcellular location is the chloroplast thylakoid membrane. In terms of biological role, one of the components of the core complex of photosystem II (PSII). PSII is a light-driven water:plastoquinone oxidoreductase that uses light energy to abstract electrons from H(2)O, generating O(2) and a proton gradient subsequently used for ATP formation. It consists of a core antenna complex that captures photons, and an electron transfer chain that converts photonic excitation into a charge separation. The sequence is that of Photosystem II reaction center protein K from Gracilaria tenuistipitata var. liui (Red alga).